Consider the following 55-residue polypeptide: MCLFMSNSSLPTKPNRKTRFGDRCLLMAKQQRTRLYILRRCVSMLLCWHDHSISD.

N-linked (GlcNAc...) asparagine glycosylation occurs at Asn-7. Residues Arg-19–Asp-50 form a required for DVL/RTFL small polypeptide activity region. Residues Arg-32–Trp-48 traverse the membrane as a helical segment.

Belongs to the DVL/RTFL small polypeptides family.

Its subcellular location is the cell membrane. Small polypeptide acting as a regulatory molecule which coordinates cellular responses required for differentiation, growth and development, probably by restricting polar cell proliferation in lateral organs and coordinating socket cell recruitment and differentiation at trichome sites. This Arabidopsis thaliana (Mouse-ear cress) protein is Small polypeptide DEVIL 10.